Here is a 213-residue protein sequence, read N- to C-terminus: Bcl-2-related ovarian killer protein (213 aa).

Serine 7 bears the Phosphoserine mark. The interval 15 to 45 (MDAFDRSPTDKELVAQAKALGREYVHARLLR) is interactions with ITPR1. Glycyl lysine isopeptide (Lys-Gly) (interchain with G-Cter in ubiquitin) cross-links involve residues lysine 25 and lysine 32. Positions 32 to 44 (KALGREYVHARLL) match the BH4 motif. The BH3 motif lies at 67–83 (VCTVLLRLGDELEQIRP). The tract at residues 71-79 (LLRLGDELE) is nuclear export signal. A BH1 motif is present at residues 113 to 132 (HIFSAGITWGKVVSLYSVAA). Residues lysine 160 and lysine 177 each participate in a glycyl lysine isopeptide (Lys-Gly) (interchain with G-Cter in ubiquitin) cross-link. Positions 165 to 179 (WLRRRGGWTDVLKCV) match the BH2 motif. The helical transmembrane segment at 190-210 (WLVATLCSFGRFLKAAFFLLL) threads the bilayer.

It belongs to the Bcl-2 family. As to quaternary structure, monomer; positively regulates apoptotic process. Homodimer. Heterodimer. Oligomer; promoted by apoptotic stimuli and BH3-only proteins; mediates constitutive activation. Interacts (via BH4 domain) with ITPR1; enhances BOK expression and stabilization; limits apoptosis and prevents ubiquitination and then degradation; protects ITPR1 from proteolysis by CASP3 during apoptosis. Interacts with ITPR2 and ITPR3; binds most strongly to ITPR2, and barely to ITPR3; regulates their expression. Interacts with XPO1; translocates to the cytoplasm. Interacts with BNIP3; promotes oligomerization. Ubiquitinated by AMFR/gp78 E3 ubiquitin ligase complex; mediates degradation by ubiquitin-proteasome pathway in a VCP/p97-dependent manner; prevents from proapoptotic activity; promotes degradation of newly synthesized proteins that are not ITPR1 associated. Widely expressed. Highly expressed in brain, kidney, and spleen.

It is found in the mitochondrion membrane. Its subcellular location is the endoplasmic reticulum membrane. The protein localises to the mitochondrion inner membrane. It localises to the cytoplasm. The protein resides in the nucleus. It is found in the mitochondrion. Its subcellular location is the endoplasmic reticulum. The protein localises to the mitochondrion outer membrane. It localises to the early endosome membrane. The protein resides in the recycling endosome membrane. It is found in the nucleus outer membrane. Its subcellular location is the golgi apparatus. The protein localises to the cis-Golgi network membrane. It localises to the trans-Golgi network membrane. The protein resides in the membrane. Functionally, apoptosis regulator that functions through different apoptotic signaling pathways. Plays a roles as pro-apoptotic protein that positively regulates intrinsic apoptotic process in a BAX- and BAK1-dependent manner or in a BAX- and BAK1-independent manner. In response to endoplasmic reticulum stress promotes mitochondrial apoptosis through downstream BAX/BAK1 activation and positive regulation of PERK-mediated unfolded protein response. Activates apoptosis independently of heterodimerization with survival-promoting BCL2 and BCL2L1 through induction of mitochondrial outer membrane permeabilization, in a BAX- and BAK1-independent manner, in response to inhibition of ERAD-proteasome degradation system, resulting in cytochrome c release. In response to DNA damage, mediates intrinsic apoptotic process in a TP53-dependent manner. Plays a role in granulosa cell apoptosis by CASP3 activation. Plays a roles as anti-apoptotic protein during neuronal apoptotic process, by negatively regulating poly ADP-ribose polymerase-dependent cell death through regulation of neuronal calcium homeostasis and mitochondrial bioenergetics in response to NMDA excitation. In addition to its role in apoptosis, may regulate trophoblast cell proliferation during the early stages of placental development, by acting on G1/S transition through regulation of CCNE1 expression. May also play a role as an inducer of autophagy by disrupting interaction between MCL1 and BECN1. The polypeptide is Bcl-2-related ovarian killer protein (Mus musculus (Mouse)).